Reading from the N-terminus, the 128-residue chain is Small ribosomal subunit protein uS9 (128 aa).

Belongs to the universal ribosomal protein uS9 family.

The protein is Small ribosomal subunit protein uS9 of Amoebophilus asiaticus (strain 5a2).